Reading from the N-terminus, the 381-residue chain is Probable envelope ADP,ATP carrier protein, chloroplastic (381 aa).

The transit peptide at 1–26 (MEEDRAILTFHRIPSLNSSLITTSSP) directs the protein to the chloroplast. 5 helical membrane-spanning segments follow: residues 78–98 (LAIL…ALAG), 154–179 (LPQV…NLFK), 191–211 (LAAG…LDVL), 237–257 (IASF…YIAV), and 281–301 (LLTA…LDTV). Solcar repeat units follow at residues 85–177 (PKDA…YKNL), 185–268 (LSVI…VKKS), and 279–359 (SSLL…VKRL). Arginine 159 is an ADP binding site. Residue arginine 302 coordinates ADP. Residues 334-360 (GFLPNALKTLPNSSIRLTTFDMVKRLI) form a helical membrane-spanning segment.

It belongs to the mitochondrial carrier (TC 2.A.29) family.

The protein localises to the plastid. The protein resides in the chloroplast membrane. Functionally, transports adenine nucleotides. This chain is Probable envelope ADP,ATP carrier protein, chloroplastic (EAAC), found in Arabidopsis thaliana (Mouse-ear cress).